The following is a 371-amino-acid chain: Transaldolase (371 aa).

Lys140 acts as the Schiff-base intermediate with substrate in catalysis.

It belongs to the transaldolase family. Type 2 subfamily.

It localises to the cytoplasm. It catalyses the reaction D-sedoheptulose 7-phosphate + D-glyceraldehyde 3-phosphate = D-erythrose 4-phosphate + beta-D-fructose 6-phosphate. Its pathway is carbohydrate degradation; pentose phosphate pathway; D-glyceraldehyde 3-phosphate and beta-D-fructose 6-phosphate from D-ribose 5-phosphate and D-xylulose 5-phosphate (non-oxidative stage): step 2/3. Transaldolase is important for the balance of metabolites in the pentose-phosphate pathway. The chain is Transaldolase from Arthrobacter sp. (strain FB24).